The following is a 614-amino-acid chain: Translation initiation factor IF-2 (614 aa).

Residues 115 to 283 form the tr-type G domain; that stretch reads ARAPIVTIMG…ILLIAELNDY (169 aa). Residues 124-131 form a G1 region; the sequence is GHVDHGKT. 124 to 131 lines the GTP pocket; sequence GHVDHGKT. The tract at residues 149-153 is G2; it reads GITQH. The segment at 170–173 is G3; that stretch reads DTPG. GTP is bound by residues 170-174 and 224-227; these read DTPGH and NKMD. A G4 region spans residues 224–227; that stretch reads NKMD. The interval 260 to 262 is G5; the sequence is SAL.

This sequence belongs to the TRAFAC class translation factor GTPase superfamily. Classic translation factor GTPase family. IF-2 subfamily.

The protein resides in the cytoplasm. In terms of biological role, one of the essential components for the initiation of protein synthesis. Protects formylmethionyl-tRNA from spontaneous hydrolysis and promotes its binding to the 30S ribosomal subunits. Also involved in the hydrolysis of GTP during the formation of the 70S ribosomal complex. The polypeptide is Translation initiation factor IF-2 (Ureaplasma urealyticum serovar 10 (strain ATCC 33699 / Western)).